Reading from the N-terminus, the 556-residue chain is 2-succinyl-5-enolpyruvyl-6-hydroxy-3-cyclohexene-1-carboxylate synthase (556 aa).

Belongs to the TPP enzyme family. MenD subfamily. Homodimer. Mg(2+) is required as a cofactor. Requires Mn(2+) as cofactor. The cofactor is thiamine diphosphate.

The enzyme catalyses isochorismate + 2-oxoglutarate + H(+) = 5-enolpyruvoyl-6-hydroxy-2-succinyl-cyclohex-3-ene-1-carboxylate + CO2. The protein operates within quinol/quinone metabolism; 1,4-dihydroxy-2-naphthoate biosynthesis; 1,4-dihydroxy-2-naphthoate from chorismate: step 2/7. Its pathway is quinol/quinone metabolism; menaquinone biosynthesis. Its function is as follows. Catalyzes the thiamine diphosphate-dependent decarboxylation of 2-oxoglutarate and the subsequent addition of the resulting succinic semialdehyde-thiamine pyrophosphate anion to isochorismate to yield 2-succinyl-5-enolpyruvyl-6-hydroxy-3-cyclohexene-1-carboxylate (SEPHCHC). The sequence is that of 2-succinyl-5-enolpyruvyl-6-hydroxy-3-cyclohexene-1-carboxylate synthase from Salmonella heidelberg (strain SL476).